The chain runs to 185 residues: F-box protein At1g61340 (185 aa).

The 49-residue stretch at 78–126 (SRELEDLPLDILVRIICGVEHEDLKQLFHVSKTIREATMIAKQSHFAYS) folds into the F-box domain.

The polypeptide is F-box protein At1g61340 (Arabidopsis thaliana (Mouse-ear cress)).